Consider the following 431-residue polypeptide: Adenylosuccinate synthetase (431 aa).

GTP contacts are provided by residues 12–18 (GDEGKGK) and 40–42 (GHT). Asp-13 (proton acceptor) is an active-site residue. Residues Asp-13 and Gly-40 each coordinate Mg(2+). IMP is bound by residues 13-16 (DEGK), 38-41 (NAGH), Thr-131, Arg-145, Gln-225, Thr-240, and Arg-304. Residue His-41 is the Proton donor of the active site. 300–306 (TTTGRKR) is a binding site for substrate. Residues Arg-306, 332-334 (KLD), and 414-416 (STS) each bind GTP.

It belongs to the adenylosuccinate synthetase family. In terms of assembly, homodimer. The cofactor is Mg(2+).

The protein resides in the cytoplasm. It carries out the reaction IMP + L-aspartate + GTP = N(6)-(1,2-dicarboxyethyl)-AMP + GDP + phosphate + 2 H(+). Its pathway is purine metabolism; AMP biosynthesis via de novo pathway; AMP from IMP: step 1/2. Its function is as follows. Plays an important role in the de novo pathway of purine nucleotide biosynthesis. Catalyzes the first committed step in the biosynthesis of AMP from IMP. This chain is Adenylosuccinate synthetase, found in Dinoroseobacter shibae (strain DSM 16493 / NCIMB 14021 / DFL 12).